The primary structure comprises 137 residues: Fluoride-specific ion channel FluC 1 (137 aa).

Helical transmembrane passes span 4 to 24 (LIYIIVGIAGILGALSRYYLG), 37 to 57 (LATLLINLAGCFLLAWLTTYI), 67 to 87 (VITGIGTGFIGSFTTFSTLSV), and 98 to 118 (WGIAFLYVSCSILGGLIMSGL). 2 residues coordinate Na(+): glycine 77 and threonine 80.

It belongs to the fluoride channel Fluc/FEX (TC 1.A.43) family.

The protein localises to the cell membrane. The catalysed reaction is fluoride(in) = fluoride(out). Na(+) is not transported, but it plays an essential structural role and its presence is essential for fluoride channel function. Functionally, fluoride-specific ion channel. Important for reducing fluoride concentration in the cell, thus reducing its toxicity. The chain is Fluoride-specific ion channel FluC 1 from Bacillus anthracis.